A 209-amino-acid polypeptide reads, in one-letter code: Large ribosomal subunit protein uL3 (209 aa).

Glutamine 150 is subject to N5-methylglutamine.

Belongs to the universal ribosomal protein uL3 family. Part of the 50S ribosomal subunit. Forms a cluster with proteins L14 and L19. Post-translationally, methylated by PrmB.

One of the primary rRNA binding proteins, it binds directly near the 3'-end of the 23S rRNA, where it nucleates assembly of the 50S subunit. The protein is Large ribosomal subunit protein uL3 of Klebsiella pneumoniae (strain 342).